The sequence spans 679 residues: Methionine--tRNA ligase (679 aa).

A 'HIGH' region motif is present at residues 15–25 (PYANGPIHLGH). Zn(2+)-binding residues include cysteine 146, cysteine 149, cysteine 159, and cysteine 162. The 'KMSKS' region signature appears at 332–336 (KMSKS). Residue lysine 335 coordinates ATP. A tRNA-binding domain is found at 578 to 679 (DFAKIDLRIA…EGAQPGMKVK (102 aa)).

It belongs to the class-I aminoacyl-tRNA synthetase family. MetG type 1 subfamily. As to quaternary structure, homodimer. Zn(2+) is required as a cofactor.

It localises to the cytoplasm. The catalysed reaction is tRNA(Met) + L-methionine + ATP = L-methionyl-tRNA(Met) + AMP + diphosphate. Functionally, is required not only for elongation of protein synthesis but also for the initiation of all mRNA translation through initiator tRNA(fMet) aminoacylation. The sequence is that of Methionine--tRNA ligase from Shewanella halifaxensis (strain HAW-EB4).